The sequence spans 1432 residues: MGARASILSGGKLDDWEKIRLRPGGKKKYRIKHLVWASRELDRFALNPGLLESAKGCQQILVQLQPALQTGTQEIKSLYNTVATLYCVHQRIEIKDTMEALEKIEEIQNKNKQQAQKAETDKKDNSQVSQNYPIVQNLQGQPVHQALSPRTLNAWVKVIEEKAFSPEVIPMFSALSEGATPQDLNTMLNTIGGHQAAMQMLKDTINEEAAEWDRVHPVHAGPIAPGQVREPRGSDIAGTTSTLQEQIGWMTGNPPIPVGEIYKRWIILGLNKIVRMYSPVSILDIRQGPKEPFRDYVDRFFKALRAEQATQDVKNWMTDTLLVQNANPDCKTILKALGSGATLEEMMTACQGVGGPGHKARVLAEAMSQVTNTNIMMQRGNFRDHKRIVKCFNCGKQGHIAKNCRAPRKKGCWKCGKEGHQMKDCTERQANFFREDLAFQQREARELSPEQTRANSPTSREPRARRGDPLPETGAEGQGTVSSNFPQITLWQRPLVTIRIGGQLREALLDTGADDTVLEDIDLPRKWKPKMIGGIGGFIKVRQYNEVPIEIEGKKAIGTVLIGPTPVNIIGRNMLTQLGCTLNFPISPIETVPVKLKPGMDGPKIKQWPLTEEKIKALTQICAEMEEEGKISRVGPENPYNTPVFAIKKKDSTKWRKLVDFRELNKRTQDFWEVQLGIPHPAGLKKKKSVTVLDVGDAYFSVPLYEDFRKYTAFTIPSINNETPGIRYQYNVLPQGWKGSPAIFQCSMTKILKPFRERNPEIVIYQYMDDLYVGSDLEIEQHRRKIKELREHLLKWGFTTPDKKHQKEPPFLWMGYELHPDKWTVQPIQLPEKEDWTVNDIQKLVGKLNWASQIYPGIKVKQLCKLLKGAKALTDIVPLTREAELELAENKEILKEPVHGVYYDSAKELIAEVQKQGLDQWTYQIYQEPFKNLKTGKYAKRRSAHTNDVKQLAEVVQKIALEAIVIWGKTPKFRLPIQRETWETWWTDYWQATWIPEWEFVNTPPLVKLWYQLEKEPIMGAETFYVDGASNRETKTGKAGYVTDKGRQKVVTLTDTTNQKTELHAIYLALRDSGLEVNIVTDSQYALGIIQAQPDKSESELVNQIIEELIKKEKVYLSWVPAHKGIGGNEQVDKLVSSGIRKVLFLDGIDKAQEDHEKYHSNWRAMASDFNLPPVVAKEIVASCDKCQLKGEAMHGQVDCSPGIWQLDCTHLEGKVILVAVHVASGYIEAEVIPAETGQEAAFFILKLAGRWPVKVIHTDNGSNFTSGAVKAACWWADIKQEFGIPYNPQSQGVVESMNKELKKIIGQVREQAEHLKTAVQMAVFIHNFKRKGGIGGYSAGERIIDIIATDIQTRELQKQITKIQNFRVYYRDSRDPIWKGPAKLPWKGEGAVVIQDNSEIKVVPRRKAKIIRDYGKQMAGDDCVAGRQDED.

G2 carries N-myristoyl glycine; by host lipidation. The segment at I7 to I31 is interaction with Gp41. Residues L8–R43 are interaction with host CALM1. The tract at residues K12 to I19 is interaction with host AP3D1. The tract at residues D14 to H33 is interaction with membrane phosphatidylinositol 4,5-bisphosphate and RNA. A Nuclear export signal motif is present at residues W16–R22. The Nuclear localization signal signature appears at K26–K32. The segment at Q73–S77 is interaction with membrane phosphatidylinositol 4,5-bisphosphate. Y132 bears the Phosphotyrosine; by host mark. The interval N189 to Q227 is interaction with human PPIA/CYPA and NUP153. Residues Y277–L363 form a dimerization/Multimerization of capsid protein p24 region. 2 CCHC-type zinc fingers span residues V389–A406 and K410–E427. The interval E443–S483 is disordered. The segment covering P449–S459 has biased composition (polar residues). The span at R460–P469 shows a compositional bias: basic and acidic residues. The tract at residues P486 to L490 is dimerization of protease. The Peptidase A2 domain maps to R505 to M574. D510 serves as the catalytic For protease activity; shared with dimeric partner. 2 dimerization of protease regions span residues G534–K540 and N573–P585. A Reverse transcriptase domain is found at E628–L818. D694, D769, and D770 together coordinate Mg(2+). The segment at F811–H819 is RT 'primer grip'. A Tryptophan repeat motif motif is present at residues W982–W998. One can recognise an RNase H type-1 domain in the interval I1018–R1141. Mg(2+) contacts are provided by D1027, E1062, D1082, and D1133. Residues D1147–Q1188 form an Integrase-type zinc finger. Positions 1156, 1160, 1184, and 1187 each coordinate Zn(2+). In terms of domain architecture, Integrase catalytic spans V1198–I1348. D1208, D1260, and E1296 together coordinate Mg(2+). The integrase-type DNA-binding region spans F1367–D1414.

As to quaternary structure, homotrimer; further assembles as hexamers of trimers. Interacts with gp41 (via C-terminus). Interacts with host CALM1; this interaction induces a conformational change in the Matrix protein, triggering exposure of the myristate group. Interacts with host AP3D1; this interaction allows the polyprotein trafficking to multivesicular bodies during virus assembly. Part of the pre-integration complex (PIC) which is composed of viral genome, matrix protein, Vpr and integrase. In terms of assembly, homodimer; the homodimer further multimerizes as homohexamers or homopentamers. Interacts with human PPIA/CYPA; This interaction stabilizes the capsid. Interacts with human NUP153. Interacts with host PDZD8; this interaction stabilizes the capsid. Interacts with monkey TRIM5; this interaction destabilizes the capsid. Homodimer, whose active site consists of two apposed aspartic acid residues. As to quaternary structure, heterodimer of p66 RT and p51 RT (RT p66/p51). Heterodimerization of RT is essential for DNA polymerase activity. The overall folding of the subdomains is similar in p66 RT and p51 RT but the spatial arrangements of the subdomains are dramatically different. In terms of assembly, homotetramer; may further associate as a homohexadecamer. Part of the pre-integration complex (PIC) which is composed of viral genome, matrix protein, Vpr and integrase. Interacts with human SMARCB1/INI1 and human PSIP1/LEDGF isoform 1. Interacts with human KPNA3; this interaction might play a role in nuclear import of the pre-integration complex. Interacts with human NUP153; this interaction might play a role in nuclear import of the pre-integration complex. It depends on Mg(2+) as a cofactor. Specific enzymatic cleavages by the viral protease yield mature proteins. The protease is released by autocatalytic cleavage. The polyprotein is cleaved during and after budding, this process is termed maturation. Proteolytic cleavage of p66 RT removes the RNase H domain to yield the p51 RT subunit. Nucleocapsid protein p7 might be further cleaved after virus entry. In terms of processing, tyrosine phosphorylated presumably in the virion by a host kinase. Phosphorylation is apparently not a major regulator of membrane association. Post-translationally, phosphorylated possibly by host MAPK1; this phosphorylation is necessary for Pin1-mediated virion uncoating. Methylated by host PRMT6, impairing its function by reducing RNA annealing and the initiation of reverse transcription.

The protein localises to the host cell membrane. It is found in the host endosome. The protein resides in the host multivesicular body. Its subcellular location is the virion membrane. It localises to the host nucleus. The protein localises to the host cytoplasm. It is found in the virion. It carries out the reaction Specific for a P1 residue that is hydrophobic, and P1' variable, but often Pro.. The catalysed reaction is Endohydrolysis of RNA in RNA/DNA hybrids. Three different cleavage modes: 1. sequence-specific internal cleavage of RNA. Human immunodeficiency virus type 1 and Moloney murine leukemia virus enzymes prefer to cleave the RNA strand one nucleotide away from the RNA-DNA junction. 2. RNA 5'-end directed cleavage 13-19 nucleotides from the RNA end. 3. DNA 3'-end directed cleavage 15-20 nucleotides away from the primer terminus.. It catalyses the reaction 3'-end directed exonucleolytic cleavage of viral RNA-DNA hybrid.. The enzyme catalyses DNA(n) + a 2'-deoxyribonucleoside 5'-triphosphate = DNA(n+1) + diphosphate. Protease: The viral protease is inhibited by many synthetic protease inhibitors (PIs), such as amprenavir, atazanavir, indinavir, loprinavir, nelfinavir, ritonavir and saquinavir. Use of protease inhibitors in tritherapy regimens permit more ambitious therapeutic strategies. Reverse transcriptase/ribonuclease H: RT can be inhibited either by nucleoside RT inhibitors (NRTIs) or by non nucleoside RT inhibitors (NNRTIs). NRTIs act as chain terminators, whereas NNRTIs inhibit DNA polymerization by binding a small hydrophobic pocket near the RT active site and inducing an allosteric change in this region. Classical NRTIs are abacavir, adefovir (PMEA), didanosine (ddI), lamivudine (3TC), stavudine (d4T), tenofovir (PMPA), zalcitabine (ddC), and zidovudine (AZT). Classical NNRTIs are atevirdine (BHAP U-87201E), delavirdine, efavirenz (DMP-266), emivirine (I-EBU), and nevirapine (BI-RG-587). The tritherapies used as a basic effective treatment of AIDS associate two NRTIs and one NNRTI. Its function is as follows. Mediates, with Gag polyprotein, the essential events in virion assembly, including binding the plasma membrane, making the protein-protein interactions necessary to create spherical particles, recruiting the viral Env proteins, and packaging the genomic RNA via direct interactions with the RNA packaging sequence (Psi). Gag-Pol polyprotein may regulate its own translation, by the binding genomic RNA in the 5'-UTR. At low concentration, the polyprotein would promote translation, whereas at high concentration, the polyprotein would encapsidate genomic RNA and then shut off translation. Functionally, targets the polyprotein to the plasma membrane via a multipartite membrane-binding signal, that includes its myristoylated N-terminus. Matrix protein is part of the pre-integration complex. Implicated in the release from host cell mediated by Vpu. Binds to RNA. Forms the conical core that encapsulates the genomic RNA-nucleocapsid complex in the virion. Most core are conical, with only 7% tubular. The core is constituted by capsid protein hexamer subunits. The core is disassembled soon after virion entry. Host restriction factors such as TRIM5-alpha or TRIMCyp bind retroviral capsids and cause premature capsid disassembly, leading to blocks in reverse transcription. Capsid restriction by TRIM5 is one of the factors which restricts HIV-1 to the human species. Host PIN1 apparently facilitates the virion uncoating. On the other hand, interactions with PDZD8 or CYPA stabilize the capsid. In terms of biological role, encapsulates and protects viral dimeric unspliced genomic RNA (gRNA). Binds these RNAs through its zinc fingers. Acts as a nucleic acid chaperone which is involved in rearangement of nucleic acid secondary structure during gRNA retrotranscription. Also facilitates template switch leading to recombination. As part of the polyprotein, participates in gRNA dimerization, packaging, tRNA incorporation and virion assembly. Its function is as follows. Aspartyl protease that mediates proteolytic cleavages of Gag and Gag-Pol polyproteins during or shortly after the release of the virion from the plasma membrane. Cleavages take place as an ordered, step-wise cascade to yield mature proteins. This process is called maturation. Displays maximal activity during the budding process just prior to particle release from the cell. Also cleaves Nef and Vif, probably concomitantly with viral structural proteins on maturation of virus particles. Hydrolyzes host EIF4GI and PABP1 in order to shut off the capped cellular mRNA translation. The resulting inhibition of cellular protein synthesis serves to ensure maximal viral gene expression and to evade host immune response. Also mediates cleavage of host YTHDF3. Mediates cleavage of host CARD8, thereby activating the CARD8 inflammasome, leading to the clearance of latent HIV-1 in patient CD4(+) T-cells after viral reactivation; in contrast, HIV-1 can evade CARD8-sensing when its protease remains inactive in infected cells prior to viral budding. Functionally, multifunctional enzyme that converts the viral RNA genome into dsDNA in the cytoplasm, shortly after virus entry into the cell. This enzyme displays a DNA polymerase activity that can copy either DNA or RNA templates, and a ribonuclease H (RNase H) activity that cleaves the RNA strand of RNA-DNA heteroduplexes in a partially processive 3' to 5' endonucleasic mode. Conversion of viral genomic RNA into dsDNA requires many steps. A tRNA(3)-Lys binds to the primer-binding site (PBS) situated at the 5'-end of the viral RNA. RT uses the 3' end of the tRNA primer to perform a short round of RNA-dependent minus-strand DNA synthesis. The reading proceeds through the U5 region and ends after the repeated (R) region which is present at both ends of viral RNA. The portion of the RNA-DNA heteroduplex is digested by the RNase H, resulting in a ssDNA product attached to the tRNA primer. This ssDNA/tRNA hybridizes with the identical R region situated at the 3' end of viral RNA. This template exchange, known as minus-strand DNA strong stop transfer, can be either intra- or intermolecular. RT uses the 3' end of this newly synthesized short ssDNA to perform the RNA-dependent minus-strand DNA synthesis of the whole template. RNase H digests the RNA template except for two polypurine tracts (PPTs) situated at the 5'-end and near the center of the genome. It is not clear if both polymerase and RNase H activities are simultaneous. RNase H probably can proceed both in a polymerase-dependent (RNA cut into small fragments by the same RT performing DNA synthesis) and a polymerase-independent mode (cleavage of remaining RNA fragments by free RTs). Secondly, RT performs DNA-directed plus-strand DNA synthesis using the PPTs that have not been removed by RNase H as primers. PPTs and tRNA primers are then removed by RNase H. The 3' and 5' ssDNA PBS regions hybridize to form a circular dsDNA intermediate. Strand displacement synthesis by RT to the PBS and PPT ends produces a blunt ended, linear dsDNA copy of the viral genome that includes long terminal repeats (LTRs) at both ends. Catalyzes viral DNA integration into the host chromosome, by performing a series of DNA cutting and joining reactions. This enzyme activity takes place after virion entry into a cell and reverse transcription of the RNA genome in dsDNA. The first step in the integration process is 3' processing. This step requires a complex comprising the viral genome, matrix protein, Vpr and integrase. This complex is called the pre-integration complex (PIC). The integrase protein removes 2 nucleotides from each 3' end of the viral DNA, leaving recessed CA OH's at the 3' ends. In the second step, the PIC enters cell nucleus. This process is mediated through integrase and Vpr proteins, and allows the virus to infect a non dividing cell. This ability to enter the nucleus is specific of lentiviruses, other retroviruses cannot and rely on cell division to access cell chromosomes. In the third step, termed strand transfer, the integrase protein joins the previously processed 3' ends to the 5' ends of strands of target cellular DNA at the site of integration. The 5'-ends are produced by integrase-catalyzed staggered cuts, 5 bp apart. A Y-shaped, gapped, recombination intermediate results, with the 5'-ends of the viral DNA strands and the 3' ends of target DNA strands remaining unjoined, flanking a gap of 5 bp. The last step is viral DNA integration into host chromosome. This involves host DNA repair synthesis in which the 5 bp gaps between the unjoined strands are filled in and then ligated. Since this process occurs at both cuts flanking the HIV genome, a 5 bp duplication of host DNA is produced at the ends of HIV-1 integration. Alternatively, Integrase may catalyze the excision of viral DNA just after strand transfer, this is termed disintegration. The protein is Gag-Pol polyprotein (gag-pol) of Human immunodeficiency virus type 1 group M subtype J (isolate SE9280) (HIV-1).